The following is a 215-amino-acid chain: Ribosomal RNA small subunit methyltransferase G (215 aa).

S-adenosyl-L-methionine-binding positions include G82, M87, 133–134 (VE), and R148.

It belongs to the methyltransferase superfamily. RNA methyltransferase RsmG family.

The protein localises to the cytoplasm. The enzyme catalyses guanosine(527) in 16S rRNA + S-adenosyl-L-methionine = N(7)-methylguanosine(527) in 16S rRNA + S-adenosyl-L-homocysteine. Functionally, specifically methylates the N7 position of guanine in position 527 of 16S rRNA. The chain is Ribosomal RNA small subunit methyltransferase G from Stutzerimonas stutzeri (strain A1501) (Pseudomonas stutzeri).